A 555-amino-acid chain; its full sequence is 2-isopropylmalate synthase (555 aa).

Positions 30 to 303 (PIWCSVDLRD…DPGLDCTDIN (274 aa)) constitute a Pyruvate carboxyltransferase domain. Residues aspartate 39, histidine 242, histidine 244, and asparagine 278 each contribute to the Mg(2+) site. A regulatory domain region spans residues 437-555 (QPDARIKFVD…VSAANRVIAK (119 aa)).

It belongs to the alpha-IPM synthase/homocitrate synthase family. LeuA type 2 subfamily. As to quaternary structure, homodimer. Mg(2+) is required as a cofactor.

It is found in the cytoplasm. It catalyses the reaction 3-methyl-2-oxobutanoate + acetyl-CoA + H2O = (2S)-2-isopropylmalate + CoA + H(+). It functions in the pathway amino-acid biosynthesis; L-leucine biosynthesis; L-leucine from 3-methyl-2-oxobutanoate: step 1/4. In terms of biological role, catalyzes the condensation of the acetyl group of acetyl-CoA with 3-methyl-2-oxobutanoate (2-ketoisovalerate) to form 3-carboxy-3-hydroxy-4-methylpentanoate (2-isopropylmalate). In Brucella suis biovar 1 (strain 1330), this protein is 2-isopropylmalate synthase.